The following is a 93-amino-acid chain: Large ribosomal subunit protein bL27 (93 aa).

Residues 1–9 (MIKINLQLF) constitute a propeptide that is removed on maturation.

Belongs to the bacterial ribosomal protein bL27 family. In terms of processing, the N-terminus is cleaved by ribosomal processing cysteine protease Prp.

The polypeptide is Large ribosomal subunit protein bL27 (Ruminiclostridium cellulolyticum (strain ATCC 35319 / DSM 5812 / JCM 6584 / H10) (Clostridium cellulolyticum)).